Consider the following 954-residue polypeptide: Glycine dehydrogenase (decarboxylating) (954 aa).

Lys701 carries the post-translational modification N6-(pyridoxal phosphate)lysine.

Belongs to the GcvP family. In terms of assembly, the glycine cleavage system is composed of four proteins: P, T, L and H. The cofactor is pyridoxal 5'-phosphate.

It catalyses the reaction N(6)-[(R)-lipoyl]-L-lysyl-[glycine-cleavage complex H protein] + glycine + H(+) = N(6)-[(R)-S(8)-aminomethyldihydrolipoyl]-L-lysyl-[glycine-cleavage complex H protein] + CO2. Its function is as follows. The glycine cleavage system catalyzes the degradation of glycine. The P protein binds the alpha-amino group of glycine through its pyridoxal phosphate cofactor; CO(2) is released and the remaining methylamine moiety is then transferred to the lipoamide cofactor of the H protein. The chain is Glycine dehydrogenase (decarboxylating) from Bordetella pertussis (strain Tohama I / ATCC BAA-589 / NCTC 13251).